The following is a 229-amino-acid chain: Large ribosomal subunit protein uL1 (229 aa).

Belongs to the universal ribosomal protein uL1 family. Part of the 50S ribosomal subunit.

Binds directly to 23S rRNA. The L1 stalk is quite mobile in the ribosome, and is involved in E site tRNA release. Functionally, protein L1 is also a translational repressor protein, it controls the translation of the L11 operon by binding to its mRNA. This Clostridium acetobutylicum (strain ATCC 824 / DSM 792 / JCM 1419 / IAM 19013 / LMG 5710 / NBRC 13948 / NRRL B-527 / VKM B-1787 / 2291 / W) protein is Large ribosomal subunit protein uL1.